The primary structure comprises 638 residues: Ubiquitin-associated and SH3 domain-containing protein B (638 aa).

A Phosphoserine modification is found at S9. The residue at position 12 (T12) is a Phosphothreonine. Positions 23–65 (TVKHGSALDVLLSMGFPRARAQKALASTGGRSVQAACDWLFSH) constitute a UBA domain. Residues 243–308 (ANHETLQVIY…PENYITKADE (66 aa)) enclose the SH3 domain. Residues 369-638 (GPQKRCLFVC…FNWRETLLQE (270 aa)) are protein tyrosine phosphatase. R379 is a catalytic residue. The Tele-phosphohistidine intermediate role is filled by H380. Residue H565 is part of the active site.

Homodimer. Interacts with JAK2 (in vitro). Interacts with CBL. Part of a complex containing CBL and activated EGFR. Interacts with ubiquitin and with mono-ubiquitinated proteins. Interacts with ZAP70 (ubiquitinated form). As to expression, detected in splenic T-cells and B-cells, total spleen, skeletal muscle, heart, lung, kidney, thymus, brain and liver (at protein level). Highly expressed in brain. Detected in heart, spleen, lung, liver, kidney and testis.

It localises to the cytoplasm. The protein localises to the nucleus. The catalysed reaction is O-phospho-L-tyrosyl-[protein] + H2O = L-tyrosyl-[protein] + phosphate. Its function is as follows. Interferes with CBL-mediated down-regulation and degradation of receptor-type tyrosine kinases. Promotes accumulation of activated target receptors, such as T-cell receptors and EGFR, on the cell surface. Exhibits tyrosine phosphatase activity toward several substrates including EGFR, FAK, SYK, and ZAP70. Down-regulates proteins that are dually modified by both protein tyrosine phosphorylation and ubiquitination. The sequence is that of Ubiquitin-associated and SH3 domain-containing protein B (Ubash3b) from Mus musculus (Mouse).